The chain runs to 238 residues: Probable succinyl-CoA:3-ketoacid coenzyme A transferase subunit A (238 aa).

24 to 30 (GGFGLCG) is a CoA binding site.

The protein belongs to the 3-oxoacid CoA-transferase subunit A family. As to quaternary structure, heterodimer of a subunit A and a subunit B.

It catalyses the reaction a 3-oxo acid + succinyl-CoA = a 3-oxoacyl-CoA + succinate. The chain is Probable succinyl-CoA:3-ketoacid coenzyme A transferase subunit A (scoA) from Bacillus subtilis (strain 168).